A 436-amino-acid polypeptide reads, in one-letter code: Type II methyltransferase M.BsuRI (436 aa).

An SAM-dependent MTase C5-type domain is found at 59 to 409 (INVLSLFSGC…SPIANWAINY (351 aa)). Residue C157 is part of the active site.

This sequence belongs to the class I-like SAM-binding methyltransferase superfamily. C5-methyltransferase family. In terms of assembly, monomer.

It catalyses the reaction a 2'-deoxycytidine in DNA + S-adenosyl-L-methionine = a 5-methyl-2'-deoxycytidine in DNA + S-adenosyl-L-homocysteine + H(+). A methylase, recognizes the double-stranded sequence 5'-GGCC-3', methylates C-3 on both strands, and protects the DNA from cleavage by the BsuRI endonuclease. This Bacillus subtilis protein is Type II methyltransferase M.BsuRI (hsdRM).